The chain runs to 433 residues: 3-phosphoshikimate 1-carboxyvinyltransferase (433 aa).

3-phosphoshikimate-binding residues include lysine 23, serine 24, and arginine 28. Lysine 23 contributes to the phosphoenolpyruvate binding site. The phosphoenolpyruvate site is built by glycine 95 and arginine 123. Serine 167, glutamine 169, aspartate 317, and lysine 344 together coordinate 3-phosphoshikimate. Residue glutamine 169 coordinates phosphoenolpyruvate. Aspartate 317 serves as the catalytic Proton acceptor. Residues arginine 348 and arginine 390 each contribute to the phosphoenolpyruvate site.

Belongs to the EPSP synthase family. As to quaternary structure, monomer.

The protein localises to the cytoplasm. It carries out the reaction 3-phosphoshikimate + phosphoenolpyruvate = 5-O-(1-carboxyvinyl)-3-phosphoshikimate + phosphate. It functions in the pathway metabolic intermediate biosynthesis; chorismate biosynthesis; chorismate from D-erythrose 4-phosphate and phosphoenolpyruvate: step 6/7. In terms of biological role, catalyzes the transfer of the enolpyruvyl moiety of phosphoenolpyruvate (PEP) to the 5-hydroxyl of shikimate-3-phosphate (S3P) to produce enolpyruvyl shikimate-3-phosphate and inorganic phosphate. The polypeptide is 3-phosphoshikimate 1-carboxyvinyltransferase (Staphylococcus epidermidis (strain ATCC 12228 / FDA PCI 1200)).